The chain runs to 340 residues: Anthranilate phosphoribosyltransferase (340 aa).

Residues G79, 82-83, T87, 89-92, 107-115, and S119 each bind 5-phospho-alpha-D-ribose 1-diphosphate; these read GD, NIST, and KHGNRAVTG. G79 provides a ligand contact to anthranilate. Residue S91 coordinates Mg(2+). Residue N110 participates in anthranilate binding. R165 serves as a coordination point for anthranilate. Residues D224 and E225 each coordinate Mg(2+).

This sequence belongs to the anthranilate phosphoribosyltransferase family. Homodimer. Mg(2+) serves as cofactor.

It catalyses the reaction N-(5-phospho-beta-D-ribosyl)anthranilate + diphosphate = 5-phospho-alpha-D-ribose 1-diphosphate + anthranilate. Its pathway is amino-acid biosynthesis; L-tryptophan biosynthesis; L-tryptophan from chorismate: step 2/5. Catalyzes the transfer of the phosphoribosyl group of 5-phosphorylribose-1-pyrophosphate (PRPP) to anthranilate to yield N-(5'-phosphoribosyl)-anthranilate (PRA). The chain is Anthranilate phosphoribosyltransferase from Syntrophomonas wolfei subsp. wolfei (strain DSM 2245B / Goettingen).